We begin with the raw amino-acid sequence, 1083 residues long: MPTNFTVVPVEARADGAGDEAAERTEEPGSPESADPACPTPGDGNPRENSPFINNVEVERESYFEGKNMALFEEEMDSNPMVSSLLNKLANYTNLSQGVVEHEEDEDSRRREIKAPRMGTFIGVYLPCLQNILGVILFLRLTWIVGAAGVLESFLIVAMCCTCTMLTAISMSAIATNGVVPAGGSYYMISRSLGPEFGGAVGLCFYLGTTFAGAMYILGTIEIFLTYISPSAAIFQAETADGEAAALLNNMRVYGSCALALMAVVVFVGVKYVNKLALVFLACVVLSILAIYAGVIKTAFAPPDIPVCLLGNRTLANRNFDTCAKMQVVSNGTVTTALWRLFCNGSSLGASCDEYFVQNNVTEIQGIPGVASGVFLDNLWSTYSDKGAFVEKKGVSSVPVSEESRPGGLPYVLTDIMTYFTMLVGIYFPSVTGIMAGSNRSGDLKDAQKSIPTGTILAIVTTSFIYLSCIVLFGACIEGVVLRDKFGEALQGNLVIGMLAWPSPWVIVIGSFFSTCGAGLQSLTGAPRLLQAIARDGIIPFLQVFGHGKANGEPTWALLLTALICETGILIASLDSVAPILSMFFLMCYMFVNLACAVQTLLRTPNWRPRFKFYHWTLSFLGMSLCLALMFICSWYYALFAMLIAGCIYKYIEYRGAEKEWGDGIRGLSLNAARYALLRVEHGPPHTKNWRPQVLVMLNLDSEQCVKHPRLLSFTSQLKAGKGLTIVGSVLEGTYLDKHVEAQRAEENIRSLMSAEKMKGFCQLVVSSNLRDGASHLIQSAGLGGMKHNTVLMAWPEAWKQADNPFSWKNFVDTVRDTTAAHQALLVAKNIDLFPQNQERFSDGNIDVWWIVHDGGMLMLLPFLLRQHKVWRKCRMRIFTVAQVDDNSIQMKKDLQMFLYHLRISAEVEVVEMVENDISAFTYEKTLMMEQRSQMLKQMQLSKNEREREAQLIHDRNTASHTVATARTEAPPTPDKVQMTWTKEKLIAEKHRNKDTGTSGFKDLFSLKPDQSNVRRMHTAVKLNGVVLNKSQDAQLVLLNMPGPPKSRQGDENYMEFLEVLTEGLNRVLLVRGGGREVITIYS.

Positions 1–51 (MPTNFTVVPVEARADGAGDEAAERTEEPGSPESADPACPTPGDGNPRENSP) are disordered. The Cytoplasmic portion of the chain corresponds to 1–119 (MPTNFTVVPV…RREIKAPRMG (119 aa)). A compositionally biased stretch (basic and acidic residues) spans 12–27 (ARADGAGDEAAERTEE). Ser30, Ser33, Ser50, and Ser62 each carry phosphoserine. A discontinuously helical transmembrane segment spans residues 120-142 (TFIGVYLPCLQNILGVILFLRLT). Asn131 and Ile132 together coordinate K(+). Val135 contacts chloride. The Extracellular portion of the chain corresponds to 143-149 (WIVGAAG). Residues 150–172 (VLESFLIVAMCCTCTMLTAISMS) form a helical membrane-spanning segment. Topologically, residues 173 to 196 (AIATNGVVPAGGSYYMISRSLGPE) are cytoplasmic. A helical membrane pass occupies residues 197–225 (FGGAVGLCFYLGTTFAGAMYILGTIEIFL). The Extracellular segment spans residues 226–249 (TYISPSAAIFQAETADGEAAALLN). The next 2 membrane-spanning stretches (helical) occupy residues 250 to 271 (NMRV…VGVK) and 272 to 300 (YVNK…KTAF). Residues 301–419 (APPDIPVCLL…PYVLTDIMTY (119 aa)) lie on the Extracellular side of the membrane. N-linked (GlcNAc...) asparagine glycosylation is found at Asn312, Asn331, and Asn360. A helical membrane pass occupies residues 420-440 (FTMLVGIYFPSVTGIMAGSNR). Residues Pro429 and Thr432 each coordinate K(+). A chloride-binding site is contributed by Pro429. Chloride contacts are provided by Gly433 and Ile434. Residues 441–450 (SGDLKDAQKS) are Cytoplasmic-facing. The helical transmembrane segment at 451-473 (IPTGTILAIVTTSFIYLSCIVLF) threads the bilayer. The Extracellular portion of the chain corresponds to 474–504 (GACIEGVVLRDKFGEALQGNLVIGMLAWPSP). A helical membrane pass occupies residues 505 to 531 (WVIVIGSFFSTCGAGLQSLTGAPRLLQ). At 532–554 (AIARDGIIPFLQVFGHGKANGEP) the chain is on the cytoplasmic side. A run of 2 helical transmembrane segments spans residues 555–573 (TWAL…LIAS) and 574–598 (LDSV…ACAV). Residue Tyr589 coordinates chloride. Residues 599–612 (QTLLRTPNWRPRFK) are Cytoplasmic-facing. Transmembrane regions (helical) follow at residues 613–635 (FYHW…ICSW) and 636–651 (YYAL…IYKY). Topologically, residues 652–1083 (IEYRGAEKEW…GGREVITIYS (432 aa)) are cytoplasmic. Positions 664-680 (GIRGLSLNAARYALLRV) are scissor helix. 2 positions are modified to phosphothreonine: Thr973 and Thr980.

The protein belongs to the SLC12A transporter family. K/Cl co-transporter subfamily. In terms of assembly, homodimer; adopts a domain-swap conformation at the scissor helices connecting the transmembrane domain and C-terminal domain. Heterodimer with K-Cl cotransporter SLC12A5. Widely expressed with highest levels in kidney, liver and pancreas. Expressed in choroid plexus and suprachiasmatic nucleus.

The protein resides in the cell membrane. It carries out the reaction K(+)(in) + chloride(in) = K(+)(out) + chloride(out). Its activity is regulated as follows. Activated by N-ethylmaleimide (NEM). Inhibited by furosemide, DIDS and bumetanide. The inhibition is much stronger in the presence of 50 mM K(+) in the uptake medium. Inhibited by DIOA. Inhibited by WNK3. Mediates electroneutral potassium-chloride cotransport when activated by cell swelling. May mediate K(+) uptake into Deiters' cells in the cochlea and contribute to K(+) recycling in the inner ear. Important for the survival of cochlear outer and inner hair cells and the maintenance of the organ of Corti. May be required for basolateral Cl(-) extrusion in the kidney and contribute to renal acidification. This Rattus norvegicus (Rat) protein is Solute carrier family 12 member 7.